Consider the following 377-residue polypeptide: UPF0754 membrane protein RBAM_010020 (377 aa).

The next 2 helical transmembrane spans lie at 1 to 21 (MGIAGTFLFMIVIGAAIGAVT) and 357 to 377 (YLGGLLGGIIGAIQALFVILF).

Belongs to the UPF0754 family.

The protein localises to the cell membrane. The chain is UPF0754 membrane protein RBAM_010020 from Bacillus velezensis (strain DSM 23117 / BGSC 10A6 / LMG 26770 / FZB42) (Bacillus amyloliquefaciens subsp. plantarum).